The sequence spans 453 residues: Serine--tRNA ligase (453 aa).

249-251 (TSE) provides a ligand contact to L-serine. Residues 280 to 282 (RKE) and V296 contribute to the ATP site. Residue E303 participates in L-serine binding. 367–370 (EMVS) lines the ATP pocket. T404 is an L-serine binding site.

It belongs to the class-II aminoacyl-tRNA synthetase family. Type-1 seryl-tRNA synthetase subfamily. In terms of assembly, homodimer. The tRNA molecule binds across the dimer.

The protein resides in the cytoplasm. It carries out the reaction tRNA(Ser) + L-serine + ATP = L-seryl-tRNA(Ser) + AMP + diphosphate + H(+). The catalysed reaction is tRNA(Sec) + L-serine + ATP = L-seryl-tRNA(Sec) + AMP + diphosphate + H(+). Its pathway is aminoacyl-tRNA biosynthesis; selenocysteinyl-tRNA(Sec) biosynthesis; L-seryl-tRNA(Sec) from L-serine and tRNA(Sec): step 1/1. In terms of biological role, catalyzes the attachment of serine to tRNA(Ser). Is also able to aminoacylate tRNA(Sec) with serine, to form the misacylated tRNA L-seryl-tRNA(Sec), which will be further converted into selenocysteinyl-tRNA(Sec). The polypeptide is Serine--tRNA ligase (Archaeoglobus fulgidus (strain ATCC 49558 / DSM 4304 / JCM 9628 / NBRC 100126 / VC-16)).